The following is a 274-amino-acid chain: NH(3)-dependent NAD(+) synthetase (274 aa).

Residue 46–53 (GISGGQDS) coordinates ATP. Aspartate 52 contacts Mg(2+). Arginine 140 contacts deamido-NAD(+). Threonine 160 is a binding site for ATP. A Mg(2+)-binding site is contributed by glutamate 165. Positions 173 and 180 each coordinate deamido-NAD(+). Lysine 189 and threonine 211 together coordinate ATP. Deamido-NAD(+) is bound at residue 260 to 261 (HK).

The protein belongs to the NAD synthetase family. In terms of assembly, homodimer.

It catalyses the reaction deamido-NAD(+) + NH4(+) + ATP = AMP + diphosphate + NAD(+) + H(+). It functions in the pathway cofactor biosynthesis; NAD(+) biosynthesis; NAD(+) from deamido-NAD(+) (ammonia route): step 1/1. Its function is as follows. Catalyzes the ATP-dependent amidation of deamido-NAD to form NAD. Uses ammonia as a nitrogen source. The chain is NH(3)-dependent NAD(+) synthetase from Streptococcus equi subsp. zooepidemicus (strain H70).